A 214-amino-acid polypeptide reads, in one-letter code: Adenylate kinase (214 aa).

10 to 15 (GAGKGT) contacts ATP. Positions 30 to 59 (STGDMLRAAIKAGTELGKQAKSVIDAGQLV) are NMP. AMP-binding positions include threonine 31, arginine 36, 57–59 (QLV), 85–88 (GFPR), and glutamine 92. Positions 122–159 (GRRAHLPSGRTYHNVYNPPKEEGKDDITGEELVVRDDD) are LID. ATP is bound by residues arginine 123 and 132 to 133 (TY). Residues arginine 156 and arginine 167 each contribute to the AMP site. ATP is bound at residue lysine 200.

This sequence belongs to the adenylate kinase family. As to quaternary structure, monomer.

It is found in the cytoplasm. It carries out the reaction AMP + ATP = 2 ADP. The protein operates within purine metabolism; AMP biosynthesis via salvage pathway; AMP from ADP: step 1/1. Catalyzes the reversible transfer of the terminal phosphate group between ATP and AMP. Plays an important role in cellular energy homeostasis and in adenine nucleotide metabolism. The polypeptide is Adenylate kinase (Vibrio atlanticus (strain LGP32) (Vibrio splendidus (strain Mel32))).